Here is a 95-residue protein sequence, read N- to C-terminus: Aspartyl/glutamyl-tRNA(Asn/Gln) amidotransferase subunit C (95 aa).

Belongs to the GatC family. In terms of assembly, heterotrimer of A, B and C subunits.

The catalysed reaction is L-glutamyl-tRNA(Gln) + L-glutamine + ATP + H2O = L-glutaminyl-tRNA(Gln) + L-glutamate + ADP + phosphate + H(+). It carries out the reaction L-aspartyl-tRNA(Asn) + L-glutamine + ATP + H2O = L-asparaginyl-tRNA(Asn) + L-glutamate + ADP + phosphate + 2 H(+). In terms of biological role, allows the formation of correctly charged Asn-tRNA(Asn) or Gln-tRNA(Gln) through the transamidation of misacylated Asp-tRNA(Asn) or Glu-tRNA(Gln) in organisms which lack either or both of asparaginyl-tRNA or glutaminyl-tRNA synthetases. The reaction takes place in the presence of glutamine and ATP through an activated phospho-Asp-tRNA(Asn) or phospho-Glu-tRNA(Gln). The chain is Aspartyl/glutamyl-tRNA(Asn/Gln) amidotransferase subunit C from Allorhizobium ampelinum (strain ATCC BAA-846 / DSM 112012 / S4) (Agrobacterium vitis (strain S4)).